A 346-amino-acid chain; its full sequence is Dihydroorotase (346 aa).

Residues His14 and His16 each contribute to the Zn(2+) site. Substrate is bound by residues 16–18 (HLR) and Asn42. Lys100, His137, and His175 together coordinate Zn(2+). Lys100 bears the N6-carboxylysine mark. A substrate-binding site is contributed by His137. Leu220 contacts substrate. Residue Asp248 participates in Zn(2+) binding. Asp248 is a catalytic residue. His252 and Ala264 together coordinate substrate.

Belongs to the metallo-dependent hydrolases superfamily. DHOase family. Class II DHOase subfamily. In terms of assembly, homodimer. The cofactor is Zn(2+).

The enzyme catalyses (S)-dihydroorotate + H2O = N-carbamoyl-L-aspartate + H(+). It functions in the pathway pyrimidine metabolism; UMP biosynthesis via de novo pathway; (S)-dihydroorotate from bicarbonate: step 3/3. Catalyzes the reversible cyclization of carbamoyl aspartate to dihydroorotate. The polypeptide is Dihydroorotase (Ruegeria sp. (strain TM1040) (Silicibacter sp.)).